The sequence spans 290 residues: Protease HtpX (290 aa).

The next 2 membrane-spanning stretches (helical) occupy residues 12-32 and 42-62; these read IAVM…GLLA and ALLV…LLIS. His-147 is a binding site for Zn(2+). Glu-148 is a catalytic residue. His-151 contacts Zn(2+). 2 helical membrane passes run 162–182 and 197–217; these read LIQG…GHVV and FWIV…MIVM. Glu-224 is a binding site for Zn(2+).

The protein belongs to the peptidase M48B family. Zn(2+) serves as cofactor.

It localises to the cell inner membrane. The polypeptide is Protease HtpX (Pseudoalteromonas atlantica (strain T6c / ATCC BAA-1087)).